We begin with the raw amino-acid sequence, 360 residues long: MFVDSVEIIIASGKGGPGMVSFRREKFVIKGGPDGGDGGDGGDVYFEVDNNTDTLASFRGTKHHKAKNGAPGGTRNCAGKKGEDKIIVVPPGTQVFVGDELWLDLVEPKERVLALKGGKGGLGNAHFKSATKQQPTYAQKGLEGVEKCVRLELKLIADIGLVGFPNAGKSTLISTISNAKPKIANYEFTTLVPNLGVVSVDEKSEFLMADIPGIIEGASEGKGLGISFLKHIERTKVLAFVLDASRLDLGIKEQYKRLRLELEKFSPTLANKPFGVLLNKCDVVENINEMTKDFCAFLNLEAQKLNAFDLEPYLGFLHPNLTSDFENNPNEQSALFVLPLSAVSALNTHALKFVLLKALQ.

The Obg domain occupies methionine 1 to isoleucine 156. Residues alanine 157–glutamine 360 enclose the OBG-type G domain. GTP-binding positions include glycine 163 to serine 170, phenylalanine 188 to valine 192, aspartate 210 to glycine 213, asparagine 279 to aspartate 282, and serine 341 to valine 343. Positions 170 and 190 each coordinate Mg(2+).

Belongs to the TRAFAC class OBG-HflX-like GTPase superfamily. OBG GTPase family. As to quaternary structure, monomer. Requires Mg(2+) as cofactor.

It localises to the cytoplasm. Functionally, an essential GTPase which binds GTP, GDP and possibly (p)ppGpp with moderate affinity, with high nucleotide exchange rates and a fairly low GTP hydrolysis rate. Plays a role in control of the cell cycle, stress response, ribosome biogenesis and in those bacteria that undergo differentiation, in morphogenesis control. The protein is GTPase Obg of Helicobacter pylori (strain J99 / ATCC 700824) (Campylobacter pylori J99).